The chain runs to 282 residues: 2,3,4,5-tetrahydropyridine-2,6-dicarboxylate N-succinyltransferase (282 aa).

Substrate contacts are provided by arginine 109 and aspartate 146.

Belongs to the transferase hexapeptide repeat family. As to quaternary structure, homotrimer.

It is found in the cytoplasm. It catalyses the reaction (S)-2,3,4,5-tetrahydrodipicolinate + succinyl-CoA + H2O = (S)-2-succinylamino-6-oxoheptanedioate + CoA. It functions in the pathway amino-acid biosynthesis; L-lysine biosynthesis via DAP pathway; LL-2,6-diaminopimelate from (S)-tetrahydrodipicolinate (succinylase route): step 1/3. This is 2,3,4,5-tetrahydropyridine-2,6-dicarboxylate N-succinyltransferase from Bartonella bacilliformis (strain ATCC 35685 / KC583 / Herrer 020/F12,63).